The following is a 58-amino-acid chain: Small ribosomal subunit protein eS30 (58 aa).

Positions 1–58 (MGKVHGSLARAGKVKNQTPKVPKLDKKKRLTGRAKKRQLYNRRFSDNGGRKKGPNSKA) are disordered. A compositionally biased stretch (basic residues) spans 25–40 (DKKKRLTGRAKKRQLY).

It belongs to the eukaryotic ribosomal protein eS30 family. As to quaternary structure, component of the small ribosomal subunit. Mature ribosomes consist of a small (40S) and a large (60S) subunit. The 40S subunit contains about 32 different proteins and 1 molecule of RNA (18S). The 60S subunit contains about 42 different proteins and 3 molecules of RNA (28S, 5.8S and 5S).

It is found in the cytoplasm. Component of the ribosome, a large ribonucleoprotein complex responsible for the synthesis of proteins in the cell. The small ribosomal subunit (SSU) binds messenger RNAs (mRNAs) and translates the encoded message by selecting cognate aminoacyl-transfer RNA (tRNA) molecules. The large subunit (LSU) contains the ribosomal catalytic site termed the peptidyl transferase center (PTC), which catalyzes the formation of peptide bonds, thereby polymerizing the amino acids delivered by tRNAs into a polypeptide chain. The nascent polypeptides leave the ribosome through a tunnel in the LSU and interact with protein factors that function in enzymatic processing, targeting, and the membrane insertion of nascent chains at the exit of the ribosomal tunnel. The sequence is that of Small ribosomal subunit protein eS30 from Plasmodium falciparum (isolate 3D7).